Reading from the N-terminus, the 2274-residue chain is Adenomatous polyposis coli protein 2 (2274 aa).

A coiled-coil region spans residues 5–59; sequence MASYEQLVRQVEALKAENTHLRQELRDNSSHLSKLETETSGMKEVLKHLQGKLEQ. Disordered regions lie at residues 97–120 and 248–269; these read GPEPAARTPEGSPVHGSGPSKDSF and VEEEQEAEVPTHPEDGTPQPGN. ARM repeat units lie at residues 301–341, 472–511, 515–555, 557–602, 608–647, and 650–689; these read PESC…GAKD, ANKATLCARRGCMEAIVAQLGSESEELHQVVSSILRNLSW, INSK…NLSA, STEN…NVSS, EDYRQVLRDHNCLQTLLQHLTSHSLTIVSNACGTLWNLSA, and PRDQELLWDLGAVGMLRNLVHSKHKMIAMGSAAALRNLLA. Positions 832 to 856 form a coiled coil; it reads AAKAKAKLALAVARIDRLVEDISAL. Disordered regions lie at residues 859–901, 1061–1143, and 1165–1216; these read SSDD…GSRA, CSSL…NCVQ, and SIAS…TSQF. A compositionally biased stretch (low complexity) spans 861–870; sequence DDSFSLSSGD. Copy 1 of the repeat occupies 1049–1068; the sequence is LVAQDGPMSLSRCSSLSSLS. The segment at 1049-1565 is 5 X 20 AA approximate repeat of F-X-V-E-X-T-P-X-C-F-S-R-X-S-S-L-S-S-L-S; sequence LVAQDGPMSL…SLTSSASSLS (517 aa). Residues 1049–1565 form an interaction with CTNNB1 region; it reads LVAQDGPMSL…SLTSSASSLS (517 aa). Positions 1077-1086 are enriched in polar residues; it reads QAENLDSDSS. The span at 1092–1103 shows a compositional bias: low complexity; sequence EAGPGEAELGRA. Residues 1133-1143 show a composition bias toward polar residues; that stretch reads TPSSSSENCVQ. Repeat unit 2 spans residues 1140-1159; sequence NCVQETPLVLSRCSSVSSLG. Copy 3 of the repeat occupies 1250–1269; the sequence is FTVEKPDENFSCASSLSALA. Disordered stretches follow at residues 1290 to 1323, 1368 to 1480, 1493 to 1631, 1699 to 2003, 2022 to 2122, and 2135 to 2274; these read ERAVGGGGHRRRDEAASRLDGPAPAGSRARSATD, RGDD…LQSL, FYDS…DIRP, STLQ…RGRP, PRQP…IKDE, and TALP…SLLE. Positions 1374-1397 are enriched in polar residues; the sequence is TDSAEGTPVNFSSAASLSDETLQG. Residues 1375–1394 form repeat 4; the sequence is DSAEGTPVNFSSAASLSDET. Positions 1399–1411 are enriched in basic and acidic residues; that stretch reads SRDKPAGPGDRQK. Polar residues predominate over residues 1455–1470; it reads RPQSARSNRDSSCQTR. The span at 1517–1529 shows a compositional bias: basic and acidic residues; sequence LKREKPAGRKETP. The stretch at 1546–1565 is repeat 5; that stretch reads LIVDETPPCYSLTSSASSLS. Positions 1556 to 1574 are enriched in low complexity; it reads SLTSSASSLSEPEAPEQPA. Phosphoserine is present on residues Ser-1563 and Ser-1565. Positions 1608–1624 are enriched in basic residues; it reads PRRRTQVPGSRRRKPRA. Low complexity-rich tracts occupy residues 1780 to 1795 and 1839 to 1868; these read SGPCTTPKKTGTSGTT and LAKTPSSSSSQTSPASQPLPRRSPLATPTG. The tract at residues 1792 to 1871 is required for localization to microtubules and function in microtubule stabilization; it reads SGTTQPETVT…PLATPTGGPL (80 aa). Ser-1861 is modified (phosphoserine). Residues 1910–1921 show a composition bias toward pro residues; that stretch reads RVPPPLARPSPE. 2 stretches are compositionally biased toward low complexity: residues 1945 to 1955 and 1983 to 1997; these read RMASARSSGSE and LSSADSTASTSQAAS. An interaction with MAPRE1 and MAPRE3 region spans residues 2037 to 2114; sequence GLAPLAPRRT…PLPRVAPPGT (78 aa). The segment covering 2165 to 2179 has biased composition (polar residues); that stretch reads DVATSKTNSSTSPSL.

It belongs to the adenomatous polyposis coli (APC) family. In terms of assembly, interacts with PSRC1. Interacts with MAPRE3. Interacts with APC, CTNNB1, TP53BP2, MAPRE1 and possibly with AXIN2. Expressed in brain and other neural tissues.

It localises to the cytoplasm. The protein localises to the cytoskeleton. The protein resides in the golgi apparatus. It is found in the perinuclear region. Functionally, stabilizes microtubules and may regulate actin fiber dynamics through the activation of Rho family GTPases. May also function in Wnt signaling by promoting the rapid degradation of CTNNB1. The protein is Adenomatous polyposis coli protein 2 (Apc2) of Mus musculus (Mouse).